Here is a 437-residue protein sequence, read N- to C-terminus: Repulsive guidance molecule B (437 aa).

Positions 1–45 (MGLRAAPSSAAAAAAEVEQRRSPGLCPPPLELLLLLLFSLGLLHA) are cleaved as a signal peptide. Asn-120 carries N-linked (GlcNAc...) asparagine glycosylation. Positions 121–133 (CSKDGPTSSTNPE) are enriched in polar residues. A disordered region spans residues 121–153 (CSKDGPTSSTNPEVTHDPCNYHSHAGAREHRRG). Disulfide bonds link Cys-139/Cys-226 and Cys-163/Cys-312. A glycan (N-linked (GlcNAc...) asparagine) is linked at Asn-383. A lipid anchor (GPI-anchor amidated asparagine) is attached at Asn-413. The propeptide at 414–437 (GTPRGGSDLSVSLGLTCLILIVFL) is removed in mature form.

This sequence belongs to the repulsive guidance molecule (RGM) family. As to quaternary structure, homooligomer. Interacts with DRGX. Interacts with BMP2 and BMP4. Interacts with the BMP type I receptors ACVR1, BMPR1A and BMPR1B and with the BMP type II receptor ACVR2B. The functional complex with its receptor NEO1/neogenin appears to be a heterotetramer with a 2:2 stoichiometry, RGM molecules acting as staples that bring two NEO1 receptors together without interacting themselves, this arrangement leads to activation of downstream signaling via RhoA. In terms of processing, GPI-anchored. Post-translationally, autocatalytically cleaved at low pH; the two chains remain linked via two disulfide bonds.

The protein localises to the cell membrane. The protein resides in the membrane raft. In terms of biological role, member of the repulsive guidance molecule (RGM) family that contributes to the patterning of the developing nervous system. Acts as a bone morphogenetic protein (BMP) coreceptor that potentiates BMP signaling. Promotes neuronal adhesion. May inhibit neurite outgrowth. The protein is Repulsive guidance molecule B of Homo sapiens (Human).